A 201-amino-acid polypeptide reads, in one-letter code: Holliday junction branch migration complex subunit RuvA (201 aa).

Positions M1–A64 are domain I. Positions Q65–E143 are domain II. The tract at residues H144–S154 is flexible linker. The domain III stretch occupies residues S154–L201.

It belongs to the RuvA family. Homotetramer. Forms an RuvA(8)-RuvB(12)-Holliday junction (HJ) complex. HJ DNA is sandwiched between 2 RuvA tetramers; dsDNA enters through RuvA and exits via RuvB. An RuvB hexamer assembles on each DNA strand where it exits the tetramer. Each RuvB hexamer is contacted by two RuvA subunits (via domain III) on 2 adjacent RuvB subunits; this complex drives branch migration. In the full resolvosome a probable DNA-RuvA(4)-RuvB(12)-RuvC(2) complex forms which resolves the HJ.

The protein localises to the cytoplasm. In terms of biological role, the RuvA-RuvB-RuvC complex processes Holliday junction (HJ) DNA during genetic recombination and DNA repair, while the RuvA-RuvB complex plays an important role in the rescue of blocked DNA replication forks via replication fork reversal (RFR). RuvA specifically binds to HJ cruciform DNA, conferring on it an open structure. The RuvB hexamer acts as an ATP-dependent pump, pulling dsDNA into and through the RuvAB complex. HJ branch migration allows RuvC to scan DNA until it finds its consensus sequence, where it cleaves and resolves the cruciform DNA. In Actinobacillus pleuropneumoniae serotype 7 (strain AP76), this protein is Holliday junction branch migration complex subunit RuvA.